Reading from the N-terminus, the 342-residue chain is N-acetyl-gamma-glutamyl-phosphate reductase (342 aa).

Cys-147 is an active-site residue.

Belongs to the NAGSA dehydrogenase family. Type 1 subfamily.

It localises to the cytoplasm. It carries out the reaction N-acetyl-L-glutamate 5-semialdehyde + phosphate + NADP(+) = N-acetyl-L-glutamyl 5-phosphate + NADPH + H(+). Its pathway is amino-acid biosynthesis; L-arginine biosynthesis; N(2)-acetyl-L-ornithine from L-glutamate: step 3/4. In terms of biological role, catalyzes the NADPH-dependent reduction of N-acetyl-5-glutamyl phosphate to yield N-acetyl-L-glutamate 5-semialdehyde. This chain is N-acetyl-gamma-glutamyl-phosphate reductase, found in Campylobacter jejuni subsp. jejuni serotype O:6 (strain 81116 / NCTC 11828).